The chain runs to 261 residues: 4-hydroxy-tetrahydrodipicolinate reductase (261 aa).

9–14 serves as a coordination point for NAD(+); the sequence is GCLGRM. NADP(+) is bound at residue Arg36. Residues 97-99 and 118-121 each bind NAD(+); these read GTT and SANM. The active-site Proton donor/acceptor is the His151. Position 152 (His152) interacts with (S)-2,3,4,5-tetrahydrodipicolinate. The active-site Proton donor is Lys155. 161 to 162 lines the (S)-2,3,4,5-tetrahydrodipicolinate pocket; it reads GT.

Belongs to the DapB family.

It is found in the cytoplasm. The enzyme catalyses (S)-2,3,4,5-tetrahydrodipicolinate + NAD(+) + H2O = (2S,4S)-4-hydroxy-2,3,4,5-tetrahydrodipicolinate + NADH + H(+). It carries out the reaction (S)-2,3,4,5-tetrahydrodipicolinate + NADP(+) + H2O = (2S,4S)-4-hydroxy-2,3,4,5-tetrahydrodipicolinate + NADPH + H(+). Its pathway is amino-acid biosynthesis; L-lysine biosynthesis via DAP pathway; (S)-tetrahydrodipicolinate from L-aspartate: step 4/4. Its function is as follows. Catalyzes the conversion of 4-hydroxy-tetrahydrodipicolinate (HTPA) to tetrahydrodipicolinate. This chain is 4-hydroxy-tetrahydrodipicolinate reductase, found in Wolbachia pipientis wMel.